The following is a 193-amino-acid chain: Xanthine phosphoribosyltransferase (193 aa).

Xanthine is bound by residues L20 and N27. A127–A131 lines the 5-phospho-alpha-D-ribose 1-diphosphate pocket. K155 is a xanthine binding site.

Belongs to the purine/pyrimidine phosphoribosyltransferase family. Xpt subfamily. Homodimer.

The protein resides in the cytoplasm. It catalyses the reaction XMP + diphosphate = xanthine + 5-phospho-alpha-D-ribose 1-diphosphate. The protein operates within purine metabolism; XMP biosynthesis via salvage pathway; XMP from xanthine: step 1/1. Functionally, converts the preformed base xanthine, a product of nucleic acid breakdown, to xanthosine 5'-monophosphate (XMP), so it can be reused for RNA or DNA synthesis. In Porphyromonas gingivalis (strain ATCC BAA-308 / W83), this protein is Xanthine phosphoribosyltransferase.